The chain runs to 64 residues: DNA-binding protein 7a (64 aa).

Belongs to the 7 kDa DNA-binding/endoribonuclease P2 family. In terms of assembly, monomer.

It localises to the cytoplasm. Functionally, can constrain negative DNA supercoils. May be involved in maintaining the integrity of the genome at high temperature. This chain is DNA-binding protein 7a, found in Saccharolobus islandicus (strain L.D.8.5 / Lassen #2) (Sulfolobus islandicus).